A 375-amino-acid polypeptide reads, in one-letter code: tRNA-specific 2-thiouridylase MnmA (375 aa).

ATP is bound by residues glycine 12–serine 19 and methionine 38. Residues asparagine 98–aspartate 100 are interaction with target base in tRNA. Cysteine 103 functions as the Nucleophile in the catalytic mechanism. Cysteine 103 and cysteine 200 are oxidised to a cystine. Glycine 127 lines the ATP pocket. The interval lysine 150–glutamine 152 is interaction with tRNA. Cysteine 200 acts as the Cysteine persulfide intermediate in catalysis. Residues arginine 312–tyrosine 313 form an interaction with tRNA region.

Belongs to the MnmA/TRMU family.

It localises to the cytoplasm. The catalysed reaction is S-sulfanyl-L-cysteinyl-[protein] + uridine(34) in tRNA + AH2 + ATP = 2-thiouridine(34) in tRNA + L-cysteinyl-[protein] + A + AMP + diphosphate + H(+). Functionally, catalyzes the 2-thiolation of uridine at the wobble position (U34) of tRNA, leading to the formation of s(2)U34. In Lactobacillus johnsonii (strain CNCM I-12250 / La1 / NCC 533), this protein is tRNA-specific 2-thiouridylase MnmA.